Here is an 89-residue protein sequence, read N- to C-terminus: Phasin PhaP (89 aa).

Helix stretches follow at residues 3 to 26 (TQFFEEYQTQLLDWQKKFFSTWME) and 39 to 83 (DTFE…ALRQ).

As to quaternary structure, homotetramer.

The protein resides in the cellular thylakoid membrane. Its subcellular location is the cytoplasm. It participates in biopolymer metabolism; poly-(R)-3-hydroxybutanoate biosynthesis. In terms of biological role, a phasin, it attaches to the polyhydroxybutyrate (PHB) granule surface regulating the number and size of PHB granules within a cell. It probably also acts as a regulator affecting the biosynthetic activity of PHB synthase in vivo. The polypeptide is Phasin PhaP (Synechocystis sp. (strain ATCC 27184 / PCC 6803 / Kazusa)).